The sequence spans 141 residues: Putative phosphatidylglycerol/phosphatidylinositol transfer protein DDB_G0278295 (141 aa).

A signal peptide spans 1–19 (MRLLLALFFVLALVSPSFT). 2 N-linked (GlcNAc...) asparagine glycosylation sites follow: N82 and N104.

Belongs to the NPC2 family. Monomer.

Its function is as follows. Catalyzes the intermembrane transfer of phosphatidylglycerol and phosphatidylinositol. This is Putative phosphatidylglycerol/phosphatidylinositol transfer protein DDB_G0278295 from Dictyostelium discoideum (Social amoeba).